A 491-amino-acid chain; its full sequence is Regulatory protein NPR5 (491 aa).

Residues 26–116 (SDVTFSVEGR…LYSGQVSIVP (91 aa)) enclose the BTB domain. The C2HC NPR-type zinc-finger motif lies at 122 to 136 (RPNCGERGCWHTHCS). C125, C130, H132, and C135 together coordinate Zn(2+). ANK repeat units lie at residues 254 to 283 (QKIRRMRRALDSSDVELVKLMVMGEGLNLD), 284 to 313 (ESLALHYAVESCSREVVKALLELGAADVNY), 318 to 347 (AGKTPLHIAAEMVSPDMVAVLLDHHADPNV), and 351 to 385 (GGITPLDILRTLTSDFLFKGAVPGLTHIEPNKLRL). Positions 400 to 491 (EEGNNSNNQN…MYHHHHQHHF (92 aa)) are disordered. Residues 403–413 (NNSNNQNNDNN) show a composition bias toward low complexity. Positions 457–470 (DQGDDHNSQREGMS) are enriched in basic and acidic residues.

It belongs to the plant 'ANKYRIN-BTB/POZ' family. 'NOOT-BOP-COCH-like' (NBCL) subfamily. In terms of assembly, homodimer or heterodimer with BOP1. Interacts with PAN. Highly expressed in young floral meristem. Predominantly expressed in the boundary between floral meristem (FM) and sepal primordia.

The protein localises to the cytoplasm. It is found in the nucleus. It participates in protein modification; protein ubiquitination. May act as a substrate-specific adapter of an E3 ubiquitin-protein ligase complex (CUL3-RBX1-BTB) which mediates the ubiquitination and subsequent proteasomal degradation of target proteins. Acts redundantly with BOP2. BOP1/2 promote leaf and floral meristem fate and determinacy in a pathway targeting AP1 and AGL24. BOP1/2 act as transcriptional co-regulators through direct interaction with TGA factors, including PAN, a direct regulator of AP1. Controls lateral organ fate through positive regulation of adaxial-abaxial polarity genes ATHB-14/PHB, YAB1/FIL and YAB3, and through positive regulation of LOB domain-containing genes LOB, LBD6/AS2 and LBD36. Promotes and maintains a developmentally determinate state in leaf cells through the negative regulation of JAG, JGL and class I KNOX genes. Is also involved in nectary development, formation of normal abscission zones (AZs) and suppression of bract formation, probably by regulating the cell wall disorganization. The polypeptide is Regulatory protein NPR5 (Arabidopsis thaliana (Mouse-ear cress)).